The primary structure comprises 316 residues: Probable protein-L-isoaspartate O-methyltransferase (316 aa).

Residues 103–106, His111, Ser136, 157–158, 187–188, Thr263, and Gln268 contribute to the S-adenosyl-L-homocysteine site; these read ATIS, EH, and DG. Residue Ser106 is part of the active site.

This sequence belongs to the methyltransferase superfamily. L-isoaspartyl/D-aspartyl protein methyltransferase family.

The protein localises to the cytoplasm. It is found in the cytosol. It carries out the reaction [protein]-L-isoaspartate + S-adenosyl-L-methionine = [protein]-L-isoaspartate alpha-methyl ester + S-adenosyl-L-homocysteine. Functionally, initiates the repair of damaged proteins by catalyzing methyl esterification of L-isoaspartyl and D-aspartyl residues produced by spontaneous isomerization and racemization of L-aspartyl and L-asparaginyl residues in aging peptides and proteins. The polypeptide is Probable protein-L-isoaspartate O-methyltransferase (pcmA) (Dictyostelium discoideum (Social amoeba)).